The primary structure comprises 354 residues: Protein C42 (354 aa).

Residues 349 to 352 carry the Nuclear localization signal motif; sequence KRKK.

It belongs to the baculoviridae C42 protein family.

It localises to the host nucleus. In Orgyia pseudotsugata (Douglas-fir tussock moth), this protein is Protein C42.